The chain runs to 506 residues: MALTYILFQVAVALLAILTYYIHRKLTYFKRRGIPFVAPHLIRGNMEELQKTKNIHEIFQDHYNKFRESKAPFVGFFFFQSPAAFVIDLELAKQILIKDFSNFSNKGIFYNEKDDPISAHLFNLDGAQWRLLRNKLSSTFTSGKMKLMYPTVVSVANEFMTVMHEKVPKNSVLEIRDLVARFTVDVIGTCAFGIQCNSLRDEKAEFLYFGKRSLVDKRHGTLLNGFMRSYPKLARKLGMVRTAPHIQEFYSRIVTETVAVREKEHIKRNDFMDMLIELKNQKEMTLENGDVVRGLTMEEVLAQAFVFFIAGFETSSSTMGFALYELAKNPDIQDKVRAEVEEVIEQHDQNFTYECTKDLKYLNQVLDETLRLYTIVPNLDRMAAKRYVVPGHPNFVIEAGQSVIIPSSAIHHDPSIYPEPFEFRPERFSPEESAGRPSVAWLPFGDGPRNCIGLRFGQMQARIGLALLIRNFKFSTCSKTPNPLVYDPKSFVLGVKDGIYLKVETV.

C451 provides a ligand contact to heme.

The protein belongs to the cytochrome P450 family. Heme serves as cofactor.

It is found in the endoplasmic reticulum membrane. The protein resides in the microsome membrane. Functionally, involved in the metabolism of insect hormones and in the breakdown of synthetic insecticides. The polypeptide is Cytochrome P450 6a8 (Cyp6a8) (Drosophila melanogaster (Fruit fly)).